Consider the following 951-residue polypeptide: WD repeat-containing and planar cell polarity effector protein fritz (951 aa).

WD repeat units lie at residues 304–343 (PMGAQICSFAFSPDQEKLFLGSVDRNICLHDLVQQSTKYA) and 345–384 (QIEIVPNQCAWHCDSAMLCVANERSVLQCFDLALATIGHQ). 3 stretches are compositionally biased toward polar residues: residues 709–720 (TLKSNSSLQQAP), 757–771 (IPDQSAQLGQFSTMP), and 818–828 (SILSNPANPAP). 3 disordered regions span residues 709–776 (TLKS…SPPP), 816–883 (TASI…AARH), and 903–951 (EYLK…FGVV). Residues 930–942 (SSKGGNSSSSSSS) are compositionally biased toward low complexity.

Belongs to the WD repeat fritz family.

The protein localises to the cell membrane. It is found in the cytoplasm. The protein resides in the cytoskeleton. It localises to the cilium axoneme. Probable effector of the planar cell polarity signaling pathway which regulates the septin cytoskeleton in both ciliogenesis and collective cell movements. Functions cell autonomously to regulate wing cell hair polarity and number. The polypeptide is WD repeat-containing and planar cell polarity effector protein fritz (frtz) (Drosophila melanogaster (Fruit fly)).